We begin with the raw amino-acid sequence, 523 residues long: Frizzled-4 (523 aa).

Positions 1-22 are cleaved as a signal peptide; sequence MGARSLTLLYLLCCLVVGLIAG. Residues 23 to 198 lie on the Extracellular side of the membrane; sequence FGEEEERSCD…KCGYDSGLYN (176 aa). The FZ domain occupies 26 to 147; sequence EEERSCDPIR…NDHNHMCMEG (122 aa). 8 cysteine pairs are disulfide-bonded: cysteine 31–cysteine 92, cysteine 39–cysteine 85, cysteine 76–cysteine 114, cysteine 103–cysteine 144, cysteine 107–cysteine 131, cysteine 167–cysteine 186, cysteine 190–cysteine 268, and cysteine 288–cysteine 363. N-linked (GlcNAc...) asparagine glycosylation occurs at asparagine 45. A glycan (N-linked (GlcNAc...) asparagine) is linked at asparagine 130. A helical transmembrane segment spans residues 199-229; the sequence is RLSKEFTDIWMAVWASLCFISTAFTVLTFLI. At 230-235 the chain is on the cytoplasmic side; that stretch reads DSSRFC. The helical transmembrane segment at 236-261 threads the bilayer; the sequence is YPERPIIFLSMCYNIYSIAYIVRLTV. Residues 262 to 285 are Extracellular-facing; it reads GRERISCDFEEAAEPVLIQEGLKN. Residues 286 to 319 traverse the membrane as a helical segment; the sequence is TGCAIIFLLMYFFGMASSIWWVILTLTWFLAAGL. Over 320-322 the chain is Cytoplasmic; the sequence is KWG. Residues 323-351 traverse the membrane as a helical segment; that stretch reads HEAIEMHSSYFHIAAWAIPAVKTIVILIM. Residues 352–369 lie on the Extracellular side of the membrane; sequence RLVDADELTGLCYVGNQN. The helical transmembrane segment at 370–396 threads the bilayer; that stretch reads IDALTGFVVAPLFTYLVIGTLFIAAGL. Topologically, residues 397-417 are cytoplasmic; the sequence is VALFKIRSNLQKDGTKTDKLE. The helical transmembrane segment at 418 to 443 threads the bilayer; the sequence is RLMVKIGVFSVLYTVPATCVIACYFY. Over 444–459 the chain is Extracellular; it reads EVSNWNVFRYTADDSN. A helical transmembrane segment spans residues 460 to 481; that stretch reads MAVEMLNIFMSLLVGITSGMWI. Topologically, residues 482–523 are cytoplasmic; it reads WSAKTLHTWQKCTNRLVNSGKVKRKKRVDGWVKPGKGNETVV. Positions 485 to 490 match the Lys-Thr-X-X-X-Trp motif, mediates interaction with the PDZ domain of Dvl family members motif; that stretch reads KTLHTW. The PDZ-binding signature appears at 521 to 523; it reads TVV.

It belongs to the G-protein coupled receptor Fz/Smo family. Interacts (via FZ domain) with tsku; tsku competes with wnt2b for binding to fzd4, inhibiting Wnt signaling and repressing peripheral eye development.

It localises to the cell membrane. Its function is as follows. Receptor for Wnt proteins. Most frizzled receptors are coupled to the beta-catenin canonical signaling pathway, which leads to the activation of disheveled proteins, inhibition of GSK-3 kinase, nuclear accumulation of beta-catenin and activation of Wnt target genes. A second signaling pathway involving PKC and calcium fluxes has been seen for some family members, but it is not yet clear if it represents a distinct pathway or if it can be integrated in the canonical pathway, as PKC seems to be required for Wnt-mediated inactivation of GSK-3 kinase. Both pathways seem to involve interactions with G-proteins. May be involved in transduction and intercellular transmission of polarity information during tissue morphogenesis and/or in differentiated tissues. Activated by Wnt5A. The polypeptide is Frizzled-4 (fzd4) (Xenopus laevis (African clawed frog)).